The primary structure comprises 234 residues: uncharacterized protein (234 aa).

A run of 3 helical transmembrane segments spans residues 32-52 (GLRT…VSVL), 62-82 (IPAQ…LKEG), and 106-126 (QGLF…NIAL).

The protein belongs to the MgtC/SapB family.

Its subcellular location is the cell membrane. This is an uncharacterized protein from Synechocystis sp. (strain ATCC 27184 / PCC 6803 / Kazusa).